Reading from the N-terminus, the 228-residue chain is Ferric nitrobindin-like protein (228 aa).

The segment at 1 to 21 (MTSDEVRDGAGSPADSSKGNK) is disordered. The short motif at 75 to 81 (GVWRGEG) is the GXWXGXG element.

The protein belongs to the nitrobindin family.

The protein is Ferric nitrobindin-like protein of Mycobacterium leprae (strain TN).